The following is a 312-amino-acid chain: Urease accessory protein UreD (312 aa).

The tract at residues Met1–Gly50 is disordered.

The protein belongs to the UreD family. As to quaternary structure, ureD, UreF and UreG form a complex that acts as a GTP-hydrolysis-dependent molecular chaperone, activating the urease apoprotein by helping to assemble the nickel containing metallocenter of UreC. The UreE protein probably delivers the nickel.

It is found in the cytoplasm. Required for maturation of urease via the functional incorporation of the urease nickel metallocenter. The sequence is that of Urease accessory protein UreD from Sorangium cellulosum (strain So ce56) (Polyangium cellulosum (strain So ce56)).